Reading from the N-terminus, the 226-residue chain is Protein FMP52-1, mitochondrial (226 aa).

Residues 1–43 (MSAFVLGSTGLVGLQILKVLDSSTAFKKVSTVSRRLPSVTSGK) constitute a mitochondrion transit peptide.

This sequence belongs to the FMP52 family.

The protein resides in the mitochondrion outer membrane. The protein is Protein FMP52-1, mitochondrial (FMP521) of Scheffersomyces stipitis (strain ATCC 58785 / CBS 6054 / NBRC 10063 / NRRL Y-11545) (Yeast).